Here is a 598-residue protein sequence, read N- to C-terminus: Protein HIGH CHLOROPHYLL FLUORESCENCE PHENOTYPE 173, chloroplastic (598 aa).

Residues 1 to 79 (MVGSIVGSNM…ITTKESEETV (79 aa)) constitute a chloroplast transit peptide. Residues 42-106 (VIPRAQSSSS…PTLKLDDVNP (65 aa)) are disordered. Residues 73-84 (KESEETVAKKLD) are compositionally biased toward basic and acidic residues. Over residues 87 to 97 (PPSPQSPPSPP) the composition is skewed to pro residues.

It belongs to the NmrA-type oxidoreductase family. Component of a high molecular weight complex containing psbA mRNA, OHP1, OHP2 and HCF244, and PSII core proteins D1/D2, HCF136 and HCF173. Interacts with LPE1.

It localises to the plastid. Its subcellular location is the chloroplast membrane. The protein localises to the chloroplast thylakoid membrane. The protein resides in the chloroplast stroma. Auxiliary factor required, together with HCF244, for the biogenesis of photosystem II (PSII), especially for the synthesis of the reaction center proteins (e.g. D1), via the regulation of the corresponding mRNA (e.g. psbA) translation initiation (ribosomal loading) and stabilization. This Arabidopsis thaliana (Mouse-ear cress) protein is Protein HIGH CHLOROPHYLL FLUORESCENCE PHENOTYPE 173, chloroplastic.